The sequence spans 402 residues: Argininosuccinate synthase (402 aa).

Position 7–15 (7–15 (LYSGGLDTS)) interacts with ATP. An L-citrulline-binding site is contributed by tyrosine 83. Glycine 113 contributes to the ATP binding site. L-aspartate is bound by residues threonine 115, asparagine 119, and aspartate 120. An L-citrulline-binding site is contributed by asparagine 119. Positions 123, 169, 178, 253, and 265 each coordinate L-citrulline.

The protein belongs to the argininosuccinate synthase family. Type 1 subfamily. In terms of assembly, homotetramer.

It localises to the cytoplasm. The catalysed reaction is L-citrulline + L-aspartate + ATP = 2-(N(omega)-L-arginino)succinate + AMP + diphosphate + H(+). It participates in amino-acid biosynthesis; L-arginine biosynthesis; L-arginine from L-ornithine and carbamoyl phosphate: step 2/3. The protein is Argininosuccinate synthase of Thermoplasma acidophilum (strain ATCC 25905 / DSM 1728 / JCM 9062 / NBRC 15155 / AMRC-C165).